We begin with the raw amino-acid sequence, 636 residues long: 1-deoxy-D-xylulose-5-phosphate synthase (636 aa).

Thiamine diphosphate contacts are provided by residues His-72 and 113 to 115 (GHA). Asp-144 contacts Mg(2+). Residues 145–146 (GA), Asn-174, Tyr-287, and Glu-370 contribute to the thiamine diphosphate site. Asn-174 provides a ligand contact to Mg(2+).

This sequence belongs to the transketolase family. DXPS subfamily. In terms of assembly, homodimer. The cofactor is Mg(2+). Thiamine diphosphate serves as cofactor.

The catalysed reaction is D-glyceraldehyde 3-phosphate + pyruvate + H(+) = 1-deoxy-D-xylulose 5-phosphate + CO2. It participates in metabolic intermediate biosynthesis; 1-deoxy-D-xylulose 5-phosphate biosynthesis; 1-deoxy-D-xylulose 5-phosphate from D-glyceraldehyde 3-phosphate and pyruvate: step 1/1. Catalyzes the acyloin condensation reaction between C atoms 2 and 3 of pyruvate and glyceraldehyde 3-phosphate to yield 1-deoxy-D-xylulose-5-phosphate (DXP). This Rippkaea orientalis (strain PCC 8801 / RF-1) (Cyanothece sp. (strain PCC 8801)) protein is 1-deoxy-D-xylulose-5-phosphate synthase.